The chain runs to 280 residues: Succinate dehydrogenase [ubiquinone] iron-sulfur subunit, mitochondrial (280 aa).

The transit peptide at Met-1–Gly-28 directs the protein to the mitochondrion. The 2Fe-2S ferredoxin-type domain occupies Lys-40–Met-133. An N6-acetyllysine mark is found at Lys-51 and Lys-55. Positions 93, 98, 101, and 113 each coordinate [2Fe-2S] cluster. Positions Phe-146 to Trp-218 are interaction with SDHAF1. The region spanning Asp-176 to Tyr-206 is the 4Fe-4S ferredoxin-type domain. Positions 186, 189, and 192 each coordinate [4Fe-4S] cluster. Cys-196 contributes to the [3Fe-4S] cluster binding site. Residue Trp-201 participates in a ubiquinone binding. [3Fe-4S] cluster is bound by residues Cys-243 and Cys-249. [4Fe-4S] cluster is bound at residue Cys-253.

Belongs to the succinate dehydrogenase/fumarate reductase iron-sulfur protein family. As to quaternary structure, component of complex II composed of four subunits: the flavoprotein (FP) SDHA, iron-sulfur protein (IP) SDHB, and a cytochrome b560 composed of SDHC and SDHD. Interacts with SDHAF1; the interaction is required for iron-sulfur cluster incorporation into SDHB. [2Fe-2S] cluster serves as cofactor. It depends on [3Fe-4S] cluster as a cofactor. The cofactor is [4Fe-4S] cluster.

Its subcellular location is the mitochondrion inner membrane. It catalyses the reaction a quinone + succinate = fumarate + a quinol. The catalysed reaction is (R)-malate + a quinone = enol-oxaloacetate + a quinol. The enzyme catalyses (S)-malate + a quinone = enol-oxaloacetate + a quinol. Its pathway is carbohydrate metabolism; tricarboxylic acid cycle; fumarate from succinate (eukaryal route): step 1/1. Its activity is regulated as follows. Enol-oxaloacetate inhibits the succinate dehydrogenase activity. In terms of biological role, iron-sulfur protein (IP) subunit of the succinate dehydrogenase complex (mitochondrial respiratory chain complex II), responsible for transferring electrons from succinate to ubiquinone (coenzyme Q). SDH also oxidizes malate to the non-canonical enol form of oxaloacetate, enol-oxaloacetate. Enol-oxaloacetate, which is a potent inhibitor of the succinate dehydrogenase activity, is further isomerized into keto-oxaloacetate. This Bos taurus (Bovine) protein is Succinate dehydrogenase [ubiquinone] iron-sulfur subunit, mitochondrial (SDHB).